The sequence spans 245 residues: tRNA (guanine-N(1)-)-methyltransferase (245 aa).

S-adenosyl-L-methionine is bound by residues glycine 111 and 131 to 136 (IGDYVL).

The protein belongs to the RNA methyltransferase TrmD family. As to quaternary structure, homodimer.

Its subcellular location is the cytoplasm. The enzyme catalyses guanosine(37) in tRNA + S-adenosyl-L-methionine = N(1)-methylguanosine(37) in tRNA + S-adenosyl-L-homocysteine + H(+). Its function is as follows. Specifically methylates guanosine-37 in various tRNAs. This Caldicellulosiruptor saccharolyticus (strain ATCC 43494 / DSM 8903 / Tp8T 6331) protein is tRNA (guanine-N(1)-)-methyltransferase.